The chain runs to 270 residues: Hydroxyethylthiazole kinase (270 aa).

A substrate-binding site is contributed by Met-47. The ATP site is built by Arg-123 and Thr-169. Gly-196 is a substrate binding site.

Belongs to the Thz kinase family. Requires Mg(2+) as cofactor.

The catalysed reaction is 5-(2-hydroxyethyl)-4-methylthiazole + ATP = 4-methyl-5-(2-phosphooxyethyl)-thiazole + ADP + H(+). The protein operates within cofactor biosynthesis; thiamine diphosphate biosynthesis; 4-methyl-5-(2-phosphoethyl)-thiazole from 5-(2-hydroxyethyl)-4-methylthiazole: step 1/1. In terms of biological role, catalyzes the phosphorylation of the hydroxyl group of 4-methyl-5-beta-hydroxyethylthiazole (THZ). This Roseiflexus sp. (strain RS-1) protein is Hydroxyethylthiazole kinase.